We begin with the raw amino-acid sequence, 508 residues long: Aldehyde dehydrogenase family 7 member B4 (508 aa).

NAD(+) is bound at residue 244–249; it reads GSSRVG. Residue Glu-266 is the Proton acceptor of the active site. Cys-300 acts as the Nucleophile in catalysis.

This sequence belongs to the aldehyde dehydrogenase family. Homotetramer.

It carries out the reaction an aldehyde + NAD(+) + H2O = a carboxylate + NADH + 2 H(+). The sequence is that of Aldehyde dehydrogenase family 7 member B4 (ALDH7B4) from Arabidopsis thaliana (Mouse-ear cress).